The chain runs to 103 residues: MILVNTDFISGKEIETISLVKGSTIQSKNVGKDFLSGLKTLVGGELKAYSEMMNEAREIATNRMVEEAKSLGADAVINIRYATSAIMQGAAEVIVYGTAVKIL.

Belongs to the UPF0145 family.

The chain is UPF0145 protein NT01CX_0170 from Clostridium novyi (strain NT).